The sequence spans 521 residues: Probable inorganic phosphate transporter 1-3 (521 aa).

At 1–24 (MADQQLGVLKALDVAKTQLYHFTA) the chain is on the cytoplasmic side. Residues 25–45 (IVIAGMGFFTDAYDLFCVSLV) traverse the membrane as a helical segment. Topologically, residues 46-70 (TKLLGRLYYFNPTSAKPGSLPPHVA) are extracellular. Residues 71–91 (AAVNGVALCGTLAGQLFFGWL) traverse the membrane as a helical segment. Over 92 to 99 (GDKLGRKK) the chain is Cytoplasmic. A helical transmembrane segment spans residues 100-120 (VYGITLIMMILCSVASGLSLG). The Extracellular portion of the chain corresponds to 121 to 131 (NSAKGVMTTLC). Residues 132–152 (FFRFWLGFGIGGDYPLSATIM) form a helical membrane-spanning segment. At 153–161 (SEYANKKTR) the chain is on the cytoplasmic side. A helical membrane pass occupies residues 162 to 182 (GAFIAAVFAMQGVGILAGGFV). The Extracellular segment spans residues 183 to 211 (ALAVSSIFDKKFPSPTYEQDRFLSTPPQA). Residues 212–232 (DYIWRIIVMFGALPAALTYYW) traverse the membrane as a helical segment. The Cytoplasmic segment spans residues 233 to 292 (RMKMPETARYTALVAKNIKQATADMSKVLQTDLELEERVEDDVKDPKKNYGLFSKEFLRR). A helical transmembrane segment spans residues 293 to 313 (HGLHLLGTTSTWFLLDIAFYS). Over 314-348 (QNLFQKDIFSAIGWIPKAATMNAIHEVFKIARAQT) the chain is Extracellular. Residues 349–369 (LIALCSTVPGYWFTVAFIDII) traverse the membrane as a helical segment. At 370 to 371 (GR) the chain is on the cytoplasmic side. The chain crosses the membrane as a helical span at residues 372-392 (FAIQLMGFFMMTVFMFAIAFP). The Extracellular segment spans residues 393–402 (YNHWILPDNR). The helical transmembrane segment at 403–423 (IGFVVMYSLTFFFANFGPNAT) threads the bilayer. Over 424–441 (TFIVPAEIFPARLRSTCH) the chain is Cytoplasmic. The helical transmembrane segment at 442 to 462 (GISAATGKAGAIVGAFGFLYA) threads the bilayer. The Extracellular segment spans residues 463-484 (AQPQDKTKTDAGYPPGIGVKNS). A helical membrane pass occupies residues 485–505 (LIMLGVINFVGMLFTFLVPEP). Residues 506–521 (KGKSLEELSGEAEVDK) lie on the Cytoplasmic side of the membrane.

This sequence belongs to the major facilitator superfamily. Phosphate:H(+) symporter (TC 2.A.1.9) family. In terms of tissue distribution, mainly expressed in roots, especially in the stele of the primary root, the pericycle and trichoblasts of secondary roots. To a lower extent, present in hydathodes and vascular tissues of young leaves.

The protein localises to the membrane. High-affinity transporter for external inorganic phosphate. The polypeptide is Probable inorganic phosphate transporter 1-3 (PHT1-3) (Arabidopsis thaliana (Mouse-ear cress)).